Here is a 280-residue protein sequence, read N- to C-terminus: Probable cell division protein WhiA (280 aa).

The segment at residues 247-279 (SLEQIANFFFTKYNIKISRSGIQHFSVNLKKLC) is a DNA-binding region (H-T-H motif).

This sequence belongs to the WhiA family.

Involved in cell division and chromosome segregation. This chain is Probable cell division protein WhiA, found in Mycoplasma genitalium (strain ATCC 33530 / DSM 19775 / NCTC 10195 / G37) (Mycoplasmoides genitalium).